The sequence spans 639 residues: Sodium-dependent phosphate transport protein 2A (639 aa).

Residues 1–103 lie on the Cytoplasmic side of the membrane; it reads MISYGENLGG…LRRAGVTLLK (103 aa). Phosphoserine is present on residues Ser-14 and Ser-34. The chain crosses the membrane as a helical span at residues 104–125; sequence VPLMLSFLYLFVCSLDVLSSAF. Topologically, residues 126-145 are extracellular; it reads QLAGGKVAGDIFKDNAILSN. The helical transmembrane segment at 146–163 threads the bilayer; that stretch reads PVAGLVVGILVTVLVQSS. At 164–165 the chain is on the cytoplasmic side; the sequence is ST. A helical transmembrane segment spans residues 166–185; it reads STSIVVSMVSSGLLEVSSAI. The Extracellular segment spans residues 186–347; it reads PIIMGSNIGT…HIFVDTGLPD (162 aa). 2 disulfide bridges follow: Cys-225/Cys-522 and Cys-306/Cys-336. 3 N-linked (GlcNAc...) asparagine glycosylation sites follow: Asn-298, Asn-323, and Asn-330. Residues 348-370 form a helical membrane-spanning segment; the sequence is LAVGLILLAGSLALLCTCLILLV. Topologically, residues 371–412 are cytoplasmic; sequence KMLNSLLKGQVAKVIQKVINTDFPTPFTWATGYFAMVVGASM. Residues 413 to 436 form a helical membrane-spanning segment; sequence TFVVQSSSVFTSAITPLIGLGVIS. Over 437–466 the chain is Extracellular; that stretch reads IERAYPLTLGSNIGTTTTAILAALASPREK. The helical transmembrane segment at 467 to 487 threads the bilayer; the sequence is LSSAFQIALCHFFFNISGILL. At 488–513 the chain is on the cytoplasmic side; sequence WYPVPCTRLPIRMAKALGKRTAKYRW. Thr-508 is modified (phosphothreonine; by PKC). Residues 514–534 form a helical membrane-spanning segment; the sequence is FAVLYLLLCFLLLPSMVFGLS. Residues 535-539 lie on the Extracellular side of the membrane; the sequence is MAGWR. Residues 540–561 form a helical membrane-spanning segment; sequence AMVGVGAPFGALLAFVVLVSAL. The Cytoplasmic portion of the chain corresponds to 562–639; the sequence is QHRSPGCLPK…MPHHHDATRL (78 aa). Ser-607 is modified (phosphoserine). Thr-623 carries the post-translational modification Phosphothreonine. Position 625 is a phosphoserine (Ser-625).

The protein belongs to the SLC34A transporter family. In terms of assembly, interacts via its C-terminal region with NHERF4. Interacts with NHERF1. Interacts with TMEM174; regulates SLC34A1 internalization by PTH and FGF23.

It is found in the apical cell membrane. Its subcellular location is the cell membrane. The catalysed reaction is 3 Na(+)(out) + phosphate(out) = 3 Na(+)(in) + phosphate(in). Involved in actively transporting phosphate into cells via Na(+) cotransport in the renal brush border membrane. The cotransport has a Na(+):Pi stoichiometry of 3:1 and is electrogenic. The sequence is that of Sodium-dependent phosphate transport protein 2A from Ovis aries (Sheep).